Consider the following 23-residue polypeptide: Potassium channel toxin kappa-KTx 1.3 (23 aa).

2 disulfides stabilise this stretch: Cys-4–Cys-22 and Cys-8–Cys-18.

This sequence belongs to the short scorpion toxin superfamily. Potassium channel inhibitor kappa-KTx family. Kappa-KTx 1 subfamily. As to quaternary structure, monomer. In terms of processing, is not amidated. As to expression, expressed by the venom gland.

Its subcellular location is the secreted. In terms of biological role, shows very weak blocking activity on voltage-gated potassium channels Kv10.1/KCNH1/EAG1 (6.2% inhibition by 40 uM of the toxin). Has no effect on the other voltage-gated potassium channels tested. In Heterometrus spinifer (Asia giant forest scorpion), this protein is Potassium channel toxin kappa-KTx 1.3.